We begin with the raw amino-acid sequence, 431 residues long: MAKIINVIGREIMDSRGNPTVEAEVHLEGGFIGMAAAPSGASTGSREALELRDGDKSRYLGKGVLTAVANVNGPIRTALIGKDATAQAELDQIMIDLDGTENKDKLGANAILAVSLAAAKAAAAFKGMPLYAHIAELNGTPGQYAMPVPMMNILNGGEHADNNVDIQEFMVQPVGAKNFREALRMGAEIFHTLKKVLHGKGLSTSVGDEGGFAPNLSSNADALAVIKEAVELAGYKLGTDVTLALDCAASEFYKDGKYDLAGEGKVFDSNGFSDFLKSLTEQYPIVSIEDGLDESDWDGWAYQTQIMGDKIQLVGDDLFVTNTKILTRGIENGIANSILIKFNQIGSLTETLAAIRMAKAAGYTAVISHRSGETEDATIADLAVGTAAGQIKTGSLCRSDRVAKYNQLLRIEEQLGEKAPYRGLKEIKGQA.

Q167 contacts (2R)-2-phosphoglycerate. E209 acts as the Proton donor in catalysis. Mg(2+) is bound by residues D246, E289, and D316. Positions 341, 370, 371, and 392 each coordinate (2R)-2-phosphoglycerate. Catalysis depends on K341, which acts as the Proton acceptor.

The protein belongs to the enolase family. As to quaternary structure, component of the RNA degradosome, a multiprotein complex involved in RNA processing and mRNA degradation. Mg(2+) serves as cofactor.

The protein localises to the cytoplasm. Its subcellular location is the secreted. It is found in the cell surface. The enzyme catalyses (2R)-2-phosphoglycerate = phosphoenolpyruvate + H2O. Its pathway is carbohydrate degradation; glycolysis; pyruvate from D-glyceraldehyde 3-phosphate: step 4/5. Functionally, catalyzes the reversible conversion of 2-phosphoglycerate (2-PG) into phosphoenolpyruvate (PEP). It is essential for the degradation of carbohydrates via glycolysis. This Shewanella oneidensis (strain ATCC 700550 / JCM 31522 / CIP 106686 / LMG 19005 / NCIMB 14063 / MR-1) protein is Enolase.